Consider the following 131-residue polypeptide: uncharacterized protein (131 aa).

This is an uncharacterized protein from Schizosaccharomyces pombe (strain 972 / ATCC 24843) (Fission yeast).